The primary structure comprises 67 residues: UPF0434 protein Reut_A0592 (67 aa).

Belongs to the UPF0434 family.

The sequence is that of UPF0434 protein Reut_A0592 from Cupriavidus pinatubonensis (strain JMP 134 / LMG 1197) (Cupriavidus necator (strain JMP 134)).